The sequence spans 215 residues: MSEAKRLAAEKAIEYVEDGMIVGVGTGSTVAYFIDALARIQHRIKGAVSSSEQSTARLKQHGIEVIELNHSGNLSLYVDGADECDANKCLIKGGGAALTREKIIAEASERFICIVDPSKQVPVLGKFPLPVEVIPMARSLIARQIRDMTGGQPTWREGVVTDNGNQILDIHNLQITDPEKLERELNQLPGVVCVGLFARRRADVVIVGGEPPVVL.

Substrate contacts are provided by residues 26-29, 79-82, and 92-95; these read TGST, DGAD, and KGGG. E101 serves as the catalytic Proton acceptor. K119 provides a ligand contact to substrate.

The protein belongs to the ribose 5-phosphate isomerase family. As to quaternary structure, homodimer.

The catalysed reaction is aldehydo-D-ribose 5-phosphate = D-ribulose 5-phosphate. Its pathway is carbohydrate degradation; pentose phosphate pathway; D-ribose 5-phosphate from D-ribulose 5-phosphate (non-oxidative stage): step 1/1. Its function is as follows. Catalyzes the reversible conversion of ribose-5-phosphate to ribulose 5-phosphate. This Stenotrophomonas maltophilia (strain R551-3) protein is Ribose-5-phosphate isomerase A.